We begin with the raw amino-acid sequence, 108 residues long: Thiosulfate sulfurtransferase GlpE (108 aa).

The region spanning 18–106 (ENEGATLADI…WERSGLPIET (89 aa)) is the Rhodanese domain. The Cysteine persulfide intermediate role is filled by Cys66.

Belongs to the GlpE family.

The protein resides in the cytoplasm. It carries out the reaction thiosulfate + hydrogen cyanide = thiocyanate + sulfite + 2 H(+). The enzyme catalyses thiosulfate + [thioredoxin]-dithiol = [thioredoxin]-disulfide + hydrogen sulfide + sulfite + 2 H(+). Its function is as follows. Transferase that catalyzes the transfer of sulfur from thiosulfate to thiophilic acceptors such as cyanide or dithiols. May function in a CysM-independent thiosulfate assimilation pathway by catalyzing the conversion of thiosulfate to sulfite, which can then be used for L-cysteine biosynthesis. This is Thiosulfate sulfurtransferase GlpE from Actinobacillus pleuropneumoniae serotype 3 (strain JL03).